Here is a 780-residue protein sequence, read N- to C-terminus: ATP-dependent 6-phosphofructokinase, muscle type (780 aa).

The residue at position 2 (threonine 2) is an N-acetylthreonine. Positions 2-390 (THEEHHAART…NWEVYKLLAH (389 aa)) are N-terminal catalytic PFK domain 1. ATP-binding positions include glycine 25, 88–89 (RC), and 118–121 (GDGS). Residue aspartate 119 participates in Mg(2+) binding. Serine 133 carries the phosphoserine modification. Substrate-binding positions include 164–166 (SID), arginine 201, 208–210 (MGR), glutamate 264, arginine 292, and 298–301 (HVQR). The active-site Proton acceptor is aspartate 166. The residue at position 377 (serine 377) is a Phosphoserine. Residues 391 to 401 (IRPPAPKSGSY) are interdomain linker. The tract at residues 402-780 (TVAVMNVGAP…SRKRSGEATV (379 aa)) is C-terminal regulatory PFK domain 2. Residues arginine 471 and 528–532 (TVSNN) contribute to the beta-D-fructose 2,6-bisphosphate site. Residue serine 530 is glycosylated (O-linked (GlcNAc) serine). The residue at position 557 (lysine 557) is an N6-(2-hydroxyisobutyryl)lysine. Beta-D-fructose 2,6-bisphosphate-binding positions include arginine 566, 573–575 (MGG), glutamate 629, arginine 655, and 661–664 (HMQQ). Serine 667 carries the phosphoserine modification. A beta-D-fructose 2,6-bisphosphate-binding site is contributed by arginine 735. At serine 775 the chain carries Phosphoserine; by PKA.

The protein belongs to the phosphofructokinase type A (PFKA) family. ATP-dependent PFK group I subfamily. Eukaryotic two domain clade 'E' sub-subfamily. As to quaternary structure, homo- and heterotetramers. Phosphofructokinase (PFK) enzyme functions as a tetramer composed of different combinations of 3 types of subunits, called PFKM (M), PFKL (L) and PFKP (P). The composition of the PFK tetramer differs according to the tissue type it is present in. The kinetic and regulatory properties of the tetrameric enzyme are dependent on the subunit composition, hence can vary across tissues. Interacts (via C-terminus) with HK1 (via N-terminal spermatogenic cell-specific region). It depends on Mg(2+) as a cofactor. GlcNAcylation decreases enzyme activity.

It localises to the cytoplasm. The catalysed reaction is beta-D-fructose 6-phosphate + ATP = beta-D-fructose 1,6-bisphosphate + ADP + H(+). Its pathway is carbohydrate degradation; glycolysis; D-glyceraldehyde 3-phosphate and glycerone phosphate from D-glucose: step 3/4. Allosterically activated by ADP, AMP, or fructose 2,6-bisphosphate, and allosterically inhibited by ATP or citrate. Catalyzes the phosphorylation of D-fructose 6-phosphate to fructose 1,6-bisphosphate by ATP, the first committing step of glycolysis. The protein is ATP-dependent 6-phosphofructokinase, muscle type (PFKM) of Oryctolagus cuniculus (Rabbit).